The chain runs to 312 residues: Lipoyl synthase (312 aa).

The [4Fe-4S] cluster site is built by C37, C42, C48, C67, C71, C74, and S281. Positions 52–270 (RDGPGTATFM…AVAEREFDFL (219 aa)) constitute a Radical SAM core domain.

It belongs to the radical SAM superfamily. Lipoyl synthase family. [4Fe-4S] cluster serves as cofactor.

It localises to the cytoplasm. The enzyme catalyses [[Fe-S] cluster scaffold protein carrying a second [4Fe-4S](2+) cluster] + N(6)-octanoyl-L-lysyl-[protein] + 2 oxidized [2Fe-2S]-[ferredoxin] + 2 S-adenosyl-L-methionine + 4 H(+) = [[Fe-S] cluster scaffold protein] + N(6)-[(R)-dihydrolipoyl]-L-lysyl-[protein] + 4 Fe(3+) + 2 hydrogen sulfide + 2 5'-deoxyadenosine + 2 L-methionine + 2 reduced [2Fe-2S]-[ferredoxin]. The protein operates within protein modification; protein lipoylation via endogenous pathway; protein N(6)-(lipoyl)lysine from octanoyl-[acyl-carrier-protein]: step 2/2. In terms of biological role, catalyzes the radical-mediated insertion of two sulfur atoms into the C-6 and C-8 positions of the octanoyl moiety bound to the lipoyl domains of lipoate-dependent enzymes, thereby converting the octanoylated domains into lipoylated derivatives. In Halorubrum lacusprofundi (strain ATCC 49239 / DSM 5036 / JCM 8891 / ACAM 34), this protein is Lipoyl synthase.